A 145-amino-acid chain; its full sequence is uncharacterized protein (145 aa).

Residues 1–18 (MAEQQPSKEEKKEDKKDE) are compositionally biased toward basic and acidic residues. The disordered stretch occupies residues 1–61 (MAEQQPSKEE…CTEGEWDASD (61 aa)).

This is an uncharacterized protein from Caenorhabditis elegans.